The chain runs to 368 residues: MNTIGKLFRLTTFGESHGKAIGGVIDGCPAGLFVDMETIERELLRRRPGQSHYTSPRQESDMVQFISGLFRGETTGAPIAFMIDNKDVRSADYDSLSSIFRPGHADYTYFHKYGIRDTRGGGRSSARETAVRVVAGAVAKQLLAPLGIRCTAYTSQIGPVCIPQENAKEYSPEEVESSPIRCPDPNASGLMEAVIETAKKESDSVGGIVDCQISDVPVGWGEPLYGKLHAALGAAMLSINAAKGFEVGDGFALASMRGSEANDQMVAAEDGGISFLSNHSGGISGGISTGQDIRFRVAFKPTPTIGQKQQTVNEQGESISLSAVGRHDPCVVPRAVPVVEAMTWLTLADAYLASRSGRCAHSSLKCNG.

Arg-46 provides a ligand contact to NADP(+). Residues 123–125, 240–241, Gly-285, 300–304, and Arg-326 contribute to the FMN site; these read RSS, NA, and KPTPT.

The protein belongs to the chorismate synthase family. Homotetramer. The cofactor is FMNH2.

The enzyme catalyses 5-O-(1-carboxyvinyl)-3-phosphoshikimate = chorismate + phosphate. Its pathway is metabolic intermediate biosynthesis; chorismate biosynthesis; chorismate from D-erythrose 4-phosphate and phosphoenolpyruvate: step 7/7. Its function is as follows. Catalyzes the anti-1,4-elimination of the C-3 phosphate and the C-6 proR hydrogen from 5-enolpyruvylshikimate-3-phosphate (EPSP) to yield chorismate, which is the branch point compound that serves as the starting substrate for the three terminal pathways of aromatic amino acid biosynthesis. This reaction introduces a second double bond into the aromatic ring system. This chain is Chorismate synthase, found in Porphyromonas gingivalis (strain ATCC BAA-308 / W83).